Here is a 385-residue protein sequence, read N- to C-terminus: Putative 8-amino-7-oxononanoate synthase (385 aa).

Arginine 22 is a binding site for substrate. 109 to 110 (GY) contacts pyridoxal 5'-phosphate. A substrate-binding site is contributed by histidine 134. Residues serine 182, 207–210 (DEAH), and 238–241 (TLSK) each bind pyridoxal 5'-phosphate. Position 241 is an N6-(pyridoxal phosphate)lysine (lysine 241). Threonine 353 serves as a coordination point for substrate.

Belongs to the class-II pyridoxal-phosphate-dependent aminotransferase family. BioF subfamily. As to quaternary structure, homodimer. It depends on pyridoxal 5'-phosphate as a cofactor.

The enzyme catalyses 6-carboxyhexanoyl-[ACP] + L-alanine + H(+) = (8S)-8-amino-7-oxononanoate + holo-[ACP] + CO2. It participates in cofactor biosynthesis; biotin biosynthesis. In terms of biological role, catalyzes the decarboxylative condensation of pimeloyl-[acyl-carrier protein] and L-alanine to produce 8-amino-7-oxononanoate (AON), [acyl-carrier protein], and carbon dioxide. The sequence is that of Putative 8-amino-7-oxononanoate synthase (bioF) from Microcystis aeruginosa (strain NIES-843 / IAM M-2473).